A 760-amino-acid polypeptide reads, in one-letter code: Anti-sigma-I factor RsgI6 (760 aa).

Residues 1–55 (MIVGKVLDMDEKTAIIMTDDFAFLNVVRTSEMAVGKKVKVLDSDIIKPKNSLRRY) are Cytoplasmic-facing. The RsgI N-terminal anti-sigma domain maps to 2–49 (IVGKVLDMDEKTAIIMTDDFAFLNVVRTSEMAVGKKVKVLDSDIIKPK). Residues 56–76 (LPVAAVAACFVIVLSFVLMFI) traverse the membrane as a helical segment. Residues 77–760 (NGNTARKNIY…GTLQTTYRIP (684 aa)) are Extracellular-facing. The tract at residues 274-352 (AINTGPAESA…STPKPVSPVQ (79 aa)) is disordered. A compositionally biased stretch (polar residues) spans 291–352 (LPATSTPGRT…STPKPVSPVQ (62 aa)). The GH10 domain occupies 402–701 (DSSNKPIENA…NEAGRRFESL (300 aa)). Residue E538 is the Proton donor of the active site. Catalysis depends on E635, which acts as the Nucleophile.

The protein in the C-terminal section; belongs to the glycosyl hydrolase 10 (cellulase F) family. In terms of assembly, interacts (via RsgI N-terminal anti-sigma domain) with SigI6.

It localises to the cell membrane. It carries out the reaction Endohydrolysis of (1-&gt;4)-beta-D-xylosidic linkages in xylans.. It functions in the pathway glycan degradation; xylan degradation. Its function is as follows. Anti-sigma factor for SigI6. Negatively regulates SigI6 activity through direct interaction. Binding of the polysaccharide substrate to the extracellular C-terminal sensing domain of RsgI6 may induce a conformational change in its N-terminal cytoplasmic region, leading to the release and activation of SigI6. Binds to and hydrolyzes insoluble and soluble xylan substrates. Has low enzymatic activity. The chain is Anti-sigma-I factor RsgI6 from Acetivibrio thermocellus (strain ATCC 27405 / DSM 1237 / JCM 9322 / NBRC 103400 / NCIMB 10682 / NRRL B-4536 / VPI 7372) (Clostridium thermocellum).